The primary structure comprises 248 residues: Triosephosphate isomerase B (248 aa).

2 residues coordinate substrate: Asn-11 and Lys-13. The active-site Electrophile is the His-95. Residue Glu-165 is the Proton acceptor of the active site.

Belongs to the triosephosphate isomerase family. As to quaternary structure, homodimer.

The protein resides in the cytoplasm. It catalyses the reaction dihydroxyacetone phosphate = methylglyoxal + phosphate. It carries out the reaction D-glyceraldehyde 3-phosphate = dihydroxyacetone phosphate. Its pathway is carbohydrate degradation; glycolysis; D-glyceraldehyde 3-phosphate from glycerone phosphate: step 1/1. It participates in carbohydrate biosynthesis; gluconeogenesis. In terms of biological role, triosephosphate isomerase is an extremely efficient metabolic enzyme that catalyzes the interconversion between dihydroxyacetone phosphate (DHAP) and D-glyceraldehyde-3-phosphate (G3P) in glycolysis and gluconeogenesis. It is also responsible for the non-negligible production of methylglyoxal a reactive cytotoxic side-product that modifies and can alter proteins, DNA and lipids. The protein is Triosephosphate isomerase B (tpi1b) of Danio rerio (Zebrafish).